Here is a 635-residue protein sequence, read N- to C-terminus: 1-deoxy-D-xylulose-5-phosphate synthase (635 aa).

Residues His-74 and 115–117 (AHS) each bind thiamine diphosphate. Asp-146 contributes to the Mg(2+) binding site. Thiamine diphosphate-binding positions include 147 to 148 (GA), Asn-176, Tyr-283, and Glu-365. Asn-176 contributes to the Mg(2+) binding site.

Belongs to the transketolase family. DXPS subfamily. In terms of assembly, homodimer. It depends on Mg(2+) as a cofactor. Requires thiamine diphosphate as cofactor.

The enzyme catalyses D-glyceraldehyde 3-phosphate + pyruvate + H(+) = 1-deoxy-D-xylulose 5-phosphate + CO2. It functions in the pathway metabolic intermediate biosynthesis; 1-deoxy-D-xylulose 5-phosphate biosynthesis; 1-deoxy-D-xylulose 5-phosphate from D-glyceraldehyde 3-phosphate and pyruvate: step 1/1. Functionally, catalyzes the acyloin condensation reaction between C atoms 2 and 3 of pyruvate and glyceraldehyde 3-phosphate to yield 1-deoxy-D-xylulose-5-phosphate (DXP). The polypeptide is 1-deoxy-D-xylulose-5-phosphate synthase (Paraburkholderia xenovorans (strain LB400)).